A 332-amino-acid polypeptide reads, in one-letter code: Methionine import ATP-binding protein MetN (332 aa).

The ABC transporter domain occupies 2-241 (IELKGLTKVF…PGSRLRELFY (240 aa)). An ATP-binding site is contributed by 38–45 (GQSGAGKS).

Belongs to the ABC transporter superfamily. Methionine importer (TC 3.A.1.24) family. As to quaternary structure, the complex is composed of two ATP-binding proteins (MetN), two transmembrane proteins (MetI) and a solute-binding protein (MetQ).

Its subcellular location is the cell membrane. It catalyses the reaction L-methionine(out) + ATP + H2O = L-methionine(in) + ADP + phosphate + H(+). It carries out the reaction D-methionine(out) + ATP + H2O = D-methionine(in) + ADP + phosphate + H(+). Its function is as follows. Part of the ABC transporter complex MetNIQ involved in methionine import. Responsible for energy coupling to the transport system. This is Methionine import ATP-binding protein MetN from Symbiobacterium thermophilum (strain DSM 24528 / JCM 14929 / IAM 14863 / T).